The following is a 406-amino-acid chain: Peptidase T (406 aa).

His-82 lines the Zn(2+) pocket. Residue Asp-84 is part of the active site. Asp-142 lines the Zn(2+) pocket. Residue Glu-176 is the Proton acceptor of the active site. The Zn(2+) site is built by Glu-177, Asp-199, and His-381.

This sequence belongs to the peptidase M20B family. It depends on Zn(2+) as a cofactor.

The protein localises to the cytoplasm. It carries out the reaction Release of the N-terminal residue from a tripeptide.. In terms of biological role, cleaves the N-terminal amino acid of tripeptides. The protein is Peptidase T of Streptococcus agalactiae serotype Ia (strain ATCC 27591 / A909 / CDC SS700).